A 338-amino-acid polypeptide reads, in one-letter code: Legumin B (338 aa).

Residues 16 to 162 (SLNTKEDTAK…RQHSKGRKNG (147 aa)) are disordered. The segment covering 18 to 44 (NTKEDTAKRLRSPQDERGQIVKVEDGL) has biased composition (basic and acidic residues). 2 stretches are compositionally biased toward acidic residues: residues 82 to 92 (DEDEDEEEEEE) and 136 to 150 (EEEEELEKEEEEEEE). Residues 174–321 (ENIARPSRGD…AFGLRHSQVA (148 aa)) enclose the Cupin type-1 domain.

The protein belongs to the 11S seed storage protein (globulins) family. In terms of assembly, hexamer; each subunit is composed of an acidic and a basic chain derived from a single precursor and linked by a disulfide bond.

Functionally, this protein found in the seeds of many leguminous and non-leguminous plants is the source of sulfur-containing amino acids in seed meals. The sequence is that of Legumin B (LEGB) from Pisum sativum (Garden pea).